Reading from the N-terminus, the 283-residue chain is Polyamine aminopropyltransferase (283 aa).

The region spanning 5–238 (QTWIDEYHKG…GIWSWTFASS (234 aa)) is the PABS domain. Gln32 lines the S-methyl-5'-thioadenosine pocket. The spermidine site is built by His63 and Asp87. S-methyl-5'-thioadenosine contacts are provided by residues Glu107 and 139–140 (DG). Asp158 functions as the Proton acceptor in the catalytic mechanism. Spermidine is bound at residue 158-161 (DCSD).

Belongs to the spermidine/spermine synthase family. As to quaternary structure, homodimer or homotetramer.

It localises to the cytoplasm. It carries out the reaction S-adenosyl 3-(methylsulfanyl)propylamine + putrescine = S-methyl-5'-thioadenosine + spermidine + H(+). It participates in amine and polyamine biosynthesis; spermidine biosynthesis; spermidine from putrescine: step 1/1. Catalyzes the irreversible transfer of a propylamine group from the amino donor S-adenosylmethioninamine (decarboxy-AdoMet) to putrescine (1,4-diaminobutane) to yield spermidine. In Prochlorococcus marinus (strain MIT 9301), this protein is Polyamine aminopropyltransferase.